The following is a 309-amino-acid chain: Homoserine O-acetyltransferase (309 aa).

The active-site Acyl-thioester intermediate is the cysteine 142. Lysine 163 and serine 192 together coordinate substrate. Residue histidine 235 is the Proton acceptor of the active site. The active site involves glutamate 237. Substrate is bound at residue arginine 249.

It belongs to the MetA family.

The protein resides in the cytoplasm. The catalysed reaction is L-homoserine + acetyl-CoA = O-acetyl-L-homoserine + CoA. The protein operates within amino-acid biosynthesis; L-methionine biosynthesis via de novo pathway; O-acetyl-L-homoserine from L-homoserine: step 1/1. Transfers an acetyl group from acetyl-CoA to L-homoserine, forming acetyl-L-homoserine. The sequence is that of Homoserine O-acetyltransferase from Petrotoga mobilis (strain DSM 10674 / SJ95).